An 80-amino-acid chain; its full sequence is MADQFADSANNVVIEEVNKGLNPGMIVLIVVATFLLLFFVGNYALYVYAQKTLPPRKKKPVSKKKMKREKLKQGVSAPGE.

The Nuclear localization signal motif lies at 54–59 (PPRKKK). Over residues 55-70 (PRKKKPVSKKKMKREK) the composition is skewed to basic residues. The disordered stretch occupies residues 55–80 (PRKKKPVSKKKMKREKLKQGVSAPGE).

This sequence belongs to the S1FA transcription factor family.

Its subcellular location is the nucleus. Functionally, DNA-binding protein that specifically recognizes a negative element (S1F) within the RPS1 promoter. The chain is DNA-binding protein S1FA2 (S1FA2) from Oryza sativa subsp. japonica (Rice).